The chain runs to 105 residues: MFAVIKTGGKQYRVAANDVLTIEKLEASAGDSIEFTEVLVIGEGADAAIGAPFVAGASVKAEVVDQTRGKKVIAFKKRRRQNSKRSRGHRQHHTVVRITDIVAAK.

Belongs to the bacterial ribosomal protein bL21 family. As to quaternary structure, part of the 50S ribosomal subunit. Contacts protein L20.

Its function is as follows. This protein binds to 23S rRNA in the presence of protein L20. This is Large ribosomal subunit protein bL21 from Rhizobium etli (strain ATCC 51251 / DSM 11541 / JCM 21823 / NBRC 15573 / CFN 42).